The primary structure comprises 454 residues: OTU domain-containing protein 1 (454 aa).

Disordered stretches follow at residues 36-64 and 116-257; these read QSASPAAAAPEPDTGERPPAAATEPREAA and LPPP…SRAD. Over residues 52-64 the composition is skewed to low complexity; sequence RPPAAATEPREAA. Positions 116 to 125 are enriched in pro residues; the sequence is LPPPSAPSPP. 3 stretches are compositionally biased toward basic and acidic residues: residues 151 to 164, 193 to 210, and 219 to 229; these read DAPDRNFRLSEHRQ, GEERRAERSSRGWDRASG, and ALRRQDPEAEA. The OTU domain occupies 282 to 411; sequence KYRFHIIPDG…NGHYDAVFDH (130 aa). The tract at residues 287–293 is cys-loop; it reads IIPDGNC. Aspartate 290 is a catalytic residue. Cysteine 293 acts as the Nucleophile in catalysis. A his-loop region spans residues 342–352; the sequence is AAQDGAWAGYP. The tract at residues 399 to 404 is variable-loop; the sequence is WLSNGH. Histidine 404 is a catalytic residue. Residues 430-449 enclose the UIM domain; that stretch reads KRDEELAKSMAISLSKMYIE.

It carries out the reaction Thiol-dependent hydrolysis of ester, thioester, amide, peptide and isopeptide bonds formed by the C-terminal Gly of ubiquitin (a 76-residue protein attached to proteins as an intracellular targeting signal).. Deubiquitinating enzyme that specifically hydrolyzes 'Lys-63'-linked polyubiquitin to monoubiquitin. Required for the stability and translation of a subset mRNAs with a high abundance of rare codons by mediating deubiquitination of 40S ribosomal protein RPS10/eS10, thereby antagonizing ZNF598-mediated 40S ubiquitination. The abundance of rare codons in mRNAs can limit the translation rate and can lead to ribosome collisions that trigger activation of ribosome quality control (RQC) pathway by ZNF598. OTUD1-mediated deubiquitination prevents activation of the RQC and subsequent dissociation of ribosomes and stimulates formation of polysomes and translation. The chain is OTU domain-containing protein 1 (Otud1) from Mus musculus (Mouse).